A 252-amino-acid polypeptide reads, in one-letter code: 3-dehydroquinate dehydratase (252 aa).

Residues S21, 46 to 48 (EWR), and R82 contribute to the 3-dehydroquinate site. The Proton donor/acceptor role is filled by H143. Catalysis depends on K170, which acts as the Schiff-base intermediate with substrate. The 3-dehydroquinate site is built by R213, S232, and Q236.

This sequence belongs to the type-I 3-dehydroquinase family. Homodimer.

The enzyme catalyses 3-dehydroquinate = 3-dehydroshikimate + H2O. Its pathway is metabolic intermediate biosynthesis; chorismate biosynthesis; chorismate from D-erythrose 4-phosphate and phosphoenolpyruvate: step 3/7. With respect to regulation, inhibited by (2R)-2-methyl-3-dehydroquinic acid. In terms of biological role, involved in the third step of the chorismate pathway, which leads to the biosynthesis of aromatic amino acids. Catalyzes the cis-dehydration of 3-dehydroquinate (DHQ) and introduces the first double bond of the aromatic ring to yield 3-dehydroshikimate. The reaction involves the formation of an imine intermediate between the keto group of 3-dehydroquinate and the epsilon-amino group of a Lys-170 at the active site. The sequence is that of 3-dehydroquinate dehydratase from Salmonella typhimurium (strain LT2 / SGSC1412 / ATCC 700720).